Consider the following 140-residue polypeptide: Putative pre-16S rRNA nuclease (140 aa).

This sequence belongs to the YqgF nuclease family.

Its subcellular location is the cytoplasm. Functionally, could be a nuclease involved in processing of the 5'-end of pre-16S rRNA. The protein is Putative pre-16S rRNA nuclease of Halothermothrix orenii (strain H 168 / OCM 544 / DSM 9562).